The chain runs to 152 residues: Large ribosomal subunit protein uL15 (152 aa).

The disordered stretch occupies residues 1–57 (MTSTLNTLKSNSGSRKKKLRKGRGIAAGQGASCGFGMRGQKSRSGRPTRPGFEGGQM). The span at 14–23 (SRKKKLRKGR) shows a compositional bias: basic residues. Positions 25 to 37 (IAAGQGASCGFGM) are enriched in gly residues.

Belongs to the universal ribosomal protein uL15 family. In terms of assembly, part of the 50S ribosomal subunit.

Binds to the 23S rRNA. The protein is Large ribosomal subunit protein uL15 of Prochlorococcus marinus (strain MIT 9215).